We begin with the raw amino-acid sequence, 663 residues long: Spore germination protein GerIA (663 aa).

Residues 1–13 (MIWNWLRKKKKSN) are compositionally biased toward basic residues. The segment at 1-175 (MIWNWLRKKK…SGGNSIYDFT (175 aa)) is disordered. Positions 47-56 (KNNEQKDSSQ) are enriched in basic and acidic residues. Composition is skewed to low complexity over residues 57–72 (DKQQ…QDKQ), 88–101 (PKQG…QQSA), and 122–150 (DKQQ…QDKQ). 5 helical membrane passes run 414–434 (IFVD…DFFI), 451–471 (ILRL…VAVL), 491–511 (AQVP…IDLL), 541–561 (AGLT…ASFI), and 578–598 (FLAF…IFLF).

The protein belongs to the GerABKA family.

It is found in the cell membrane. Functionally, required for inosine germination. The sequence is that of Spore germination protein GerIA (gerIA) from Bacillus cereus.